The following is a 192-amino-acid chain: uncharacterized protein (192 aa).

This sequence to R.meliloti RA0936 and y4nF.

This is an uncharacterized protein from Sinorhizobium fredii (strain NBRC 101917 / NGR234).